Here is a 594-residue protein sequence, read N- to C-terminus: Aspartate--tRNA(Asp/Asn) ligase (594 aa).

Residue glutamate 175 coordinates L-aspartate. Residues 199–202 are aspartate; the sequence is QQLK. Arginine 221 is an L-aspartate binding site. ATP is bound by residues 221–223 and glutamine 230; that span reads RDE. Histidine 450 contributes to the L-aspartate binding site. Glutamate 485 provides a ligand contact to ATP. An L-aspartate-binding site is contributed by arginine 492. 537-540 provides a ligand contact to ATP; it reads GIDR.

It belongs to the class-II aminoacyl-tRNA synthetase family. Type 1 subfamily. In terms of assembly, homodimer.

The protein resides in the cytoplasm. The enzyme catalyses tRNA(Asx) + L-aspartate + ATP = L-aspartyl-tRNA(Asx) + AMP + diphosphate. Functionally, aspartyl-tRNA synthetase with relaxed tRNA specificity since it is able to aspartylate not only its cognate tRNA(Asp) but also tRNA(Asn). Reaction proceeds in two steps: L-aspartate is first activated by ATP to form Asp-AMP and then transferred to the acceptor end of tRNA(Asp/Asn). The protein is Aspartate--tRNA(Asp/Asn) ligase of Herpetosiphon aurantiacus (strain ATCC 23779 / DSM 785 / 114-95).